Here is a 213-residue protein sequence, read N- to C-terminus: Orotate phosphoribosyltransferase (213 aa).

5-phospho-alpha-D-ribose 1-diphosphate is bound at residue lysine 26. 34–35 (FF) is an orotate binding site. 5-phospho-alpha-D-ribose 1-diphosphate-binding positions include 72 to 73 (YK), arginine 99, lysine 100, lysine 103, histidine 105, and 124 to 132 (DDVITAGTA). Positions 128 and 156 each coordinate orotate.

Belongs to the purine/pyrimidine phosphoribosyltransferase family. PyrE subfamily. In terms of assembly, homodimer. Requires Mg(2+) as cofactor.

It catalyses the reaction orotidine 5'-phosphate + diphosphate = orotate + 5-phospho-alpha-D-ribose 1-diphosphate. The protein operates within pyrimidine metabolism; UMP biosynthesis via de novo pathway; UMP from orotate: step 1/2. In terms of biological role, catalyzes the transfer of a ribosyl phosphate group from 5-phosphoribose 1-diphosphate to orotate, leading to the formation of orotidine monophosphate (OMP). The polypeptide is Orotate phosphoribosyltransferase (Salmonella agona (strain SL483)).